We begin with the raw amino-acid sequence, 297 residues long: MRPELSDYEHISAGKVREIYEIDAEHLLMVVTDRISAYDFVLDTDIPDKGRVLTAMSAYFFEQIDFPNHLAGPLDDERIPEEVLGRAMVCRKLDMVPFECVARGYLTGSGLKEYEATGAVCGVKLPEGLVEASKLDEPIFTPATKAEIGDHDENVGFDVVVKDLGEDLAERLRTATLEIYSQAAKMAEEKGLILADTKFEFGLDKEGNLVLADEVLTPDSSRYWPAEGYEEGKVQPSFDKQFVRNWLTGPKSGWDKNDGSQPPELPGSVVEATRARYVEAYERISGKRFADWIGSCV.

Belongs to the SAICAR synthetase family.

The enzyme catalyses 5-amino-1-(5-phospho-D-ribosyl)imidazole-4-carboxylate + L-aspartate + ATP = (2S)-2-[5-amino-1-(5-phospho-beta-D-ribosyl)imidazole-4-carboxamido]succinate + ADP + phosphate + 2 H(+). It functions in the pathway purine metabolism; IMP biosynthesis via de novo pathway; 5-amino-1-(5-phospho-D-ribosyl)imidazole-4-carboxamide from 5-amino-1-(5-phospho-D-ribosyl)imidazole-4-carboxylate: step 1/2. The protein is Phosphoribosylaminoimidazole-succinocarboxamide synthase of Corynebacterium urealyticum (strain ATCC 43042 / DSM 7109).